Consider the following 523-residue polypeptide: Pentatricopeptide repeat-containing protein At3g21470 (523 aa).

PPR repeat units lie at residues Gly10 to Tyr43, Phe44 to Ser79, Asp80 to Thr114, Trp115 to Cys141, Asn143 to Glu173, Asn176 to Val210, Trp211 to Arg237, Asp238 to Pro272, Asp273 to Leu307, Asn308 to Arg338, Ser339 to Pro373, Asp374 to Pro408, and Asn409 to Lys439. The segment at Val444–Thr523 is type E motif.

It belongs to the PPR family. PCMP-E subfamily.

The protein is Pentatricopeptide repeat-containing protein At3g21470 (PCMP-E29) of Arabidopsis thaliana (Mouse-ear cress).